The following is a 376-amino-acid chain: Delta(12) fatty acid desaturase fat-2 (376 aa).

4 helical membrane passes run 45–65 (ISYL…VPYI), 69–89 (LGWI…SALF), 203–223 (VKCA…FVLC), and 228–248 (YTFV…LVII).

This sequence belongs to the fatty acid desaturase type 1 family.

The protein resides in the membrane. The catalysed reaction is (9Z)-octadecenoyl-CoA + 2 Fe(II)-[cytochrome b5] + O2 + 2 H(+) = (9Z,12Z)-octadecadienoyl-CoA + 2 Fe(III)-[cytochrome b5] + 2 H2O. It carries out the reaction (9Z)-hexadecenoyl-CoA + 2 Fe(II)-[cytochrome b5] + O2 + 2 H(+) = (9Z,12Z)-hexadecadienoyl-CoA + 2 Fe(III)-[cytochrome b5] + 2 H2O. The enzyme catalyses (9Z,12Z)-octadecadienoyl-CoA + 2 Fe(II)-[cytochrome b5] + O2 + 2 H(+) = (9Z,12Z,15Z)-octadecatrienoyl-CoA + 2 Fe(III)-[cytochrome b5] + 2 H2O. It catalyses the reaction (9Z)-heptadecenoyl-CoA + 2 Fe(II)-[cytochrome b5] + O2 + 2 H(+) = (9Z,12Z)-heptadecadienoyl-CoA + 2 Fe(III)-[cytochrome b5] + 2 H2O. The catalysed reaction is (9Z)-pentadecenoyl-CoA + 2 Fe(II)-[cytochrome b5] + O2 + 2 H(+) = (9Z,12Z)-pentadecadienoyl-CoA + 2 Fe(III)-[cytochrome b5] + 2 H2O. It carries out the reaction (6Z,9Z,12Z)-octadecatrienoyl-CoA + 2 Fe(II)-[cytochrome b5] + O2 + 2 H(+) = (6Z,9Z,12Z,15Z)-octadecatetraenoyl-CoA + 2 Fe(III)-[cytochrome b5] + 2 H2O. The enzyme catalyses (9Z)-tetradecenoyl-CoA + 2 Fe(II)-[cytochrome b5] + O2 + 2 H(+) = (9Z,12Z)-tetradecadienoyl-CoA + 2 Fe(III)-[cytochrome b5] + 2 H2O. It participates in lipid metabolism; polyunsaturated fatty acid biosynthesis. In terms of biological role, can function as a Delta(12)/Delta(15) bifunctional desaturase and behaves as a nu +3' desaturase. Introduces a double bond in the fatty acid chain three carbons away from an existing double bond to biosynthesize polyunsaturated fatty acids (PUFAs) endogenously (PUFAs are essential for membrane structure and many cellular and physiological processes). Acts on a number of substrates like oleoyl-CoA ((9Z)-octadecenoyl-CoA, 18:1n-9), palmitoleoyl-CoA ((9Z)-hexadecenoyl-CoA, 16:1n-7), and gamma-linolenoyl-CoA ((6Z,9Z,12Z)-octadecatrienoyl-CoA, 18:3n-6), to generate linoleoyl-CoA ((9Z,12Z)-octadecadienoyl-CoA, 18:2n-6), (9Z,12Z)-hexadecadienoyl-CoA (16:2n-4) and (6Z,9Z,12Z,15Z)-octadecatetraenoyl-CoA (18:4n-3) respectively. Unlike plants, Caenorhabditis elegans desaturases seem to use fatty acyl-CoAs as substrates. The chain is Delta(12) fatty acid desaturase fat-2 (fat-2) from Caenorhabditis elegans.